We begin with the raw amino-acid sequence, 206 residues long: Ribosomal RNA large subunit methyltransferase E (206 aa).

5 residues coordinate S-adenosyl-L-methionine: Gly61, Trp63, Asp81, Asp97, and Asp122. The active-site Proton acceptor is Lys162.

Belongs to the class I-like SAM-binding methyltransferase superfamily. RNA methyltransferase RlmE family.

It localises to the cytoplasm. It carries out the reaction uridine(2552) in 23S rRNA + S-adenosyl-L-methionine = 2'-O-methyluridine(2552) in 23S rRNA + S-adenosyl-L-homocysteine + H(+). Its function is as follows. Specifically methylates the uridine in position 2552 of 23S rRNA at the 2'-O position of the ribose in the fully assembled 50S ribosomal subunit. This is Ribosomal RNA large subunit methyltransferase E from Neisseria meningitidis serogroup C (strain 053442).